A 792-amino-acid polypeptide reads, in one-letter code: Starch synthase 2, chloroplastic/amyloplastic (792 aa).

The transit peptide at 1–55 (MASVAESSFPLLCQIKTQRRINSSTLRHSRVSYHDLPSGSLSFRSRSFVLGHRCK) directs the protein to the chloroplast. The disordered stretch occupies residues 105–295 (IKESTPDLDD…GKDEEKPPPL (191 aa)). Residues 145-156 (GSVSPSTYGKSS) are compositionally biased toward polar residues. Low complexity predominate over residues 179–192 (SSASVISSSPVTSP). The segment covering 221–233 (SVMTSPEKTSDPV) has biased composition (polar residues). Residues 266 to 275 (KTEKYVEKTP) show a composition bias toward basic and acidic residues. Lys315 contributes to the ADP-alpha-D-glucose binding site.

Belongs to the glycosyltransferase 1 family. Bacterial/plant glycogen synthase subfamily. In terms of tissue distribution, expressed in roots, leaves and flowers.

It localises to the plastid. It is found in the chloroplast. The protein localises to the amyloplast. It carries out the reaction [(1-&gt;4)-alpha-D-glucosyl](n) + ADP-alpha-D-glucose = [(1-&gt;4)-alpha-D-glucosyl](n+1) + ADP + H(+). It functions in the pathway glycan biosynthesis; starch biosynthesis. Involved in the synthesis of glycan chains within amylopectin in leaves. Is required to produce chains with a degree of polymerization of 12 to 25 (DP12-DP25). In Arabidopsis thaliana (Mouse-ear cress), this protein is Starch synthase 2, chloroplastic/amyloplastic (SS2).